Reading from the N-terminus, the 138-residue chain is MLHAKVVYDSSLHFLGFIGGIFAILGVIVLPITSGDTAFRAARLQIAEIFNVDQRSLPKRLLIAVPLFVLGYFISTIDFSVLWRYFTWANQMTAMVMLWTAAGYLYRYHKFHWVASLPAWFITTVCALICSTTKLVSA.

Helical transmembrane passes span 12–32 (LHFL…VLPI), 62–82 (LIAV…FSVL), and 111–131 (FHWV…LICS).

The protein localises to the cell membrane. This is an uncharacterized protein from Haemophilus influenzae (strain ATCC 51907 / DSM 11121 / KW20 / Rd).